Consider the following 443-residue polypeptide: MESLAALYKNHIVTLQERTRDVLARFQMDALLIHSGELVNVFLDDHPYPFKVNPQFKAWVPVTQVPNCWLLVDGVNKPKLWFYLPVDYWHNVEPLPTSFWTEEIDVIALPKADGIGSQLPAARGNIGYIGPVPERALGLGIAADKINPKGVIDYLHYYRAYKTDYELACMREAQKSAVNGHRAAYEAFQSGMSEFDINQAYLTATGHRDTDVPYSNIVALNEHASVLHYTKLDHRAPAEMRSFLLDAGAEYNGYAADLTRTWAAHGDNDFAHLIKDVNDEQLALISTMKAGTSYIDYHIQFHQRIAKLLRKHQLVTDMSEEAMVENDLTGPFMPHGIGHPLGLQVHDVAGFMQDDTGTHLAAPSKYPYLRCTRIIEPRMVLTIEPGIYFIESLLAPWREGPFSKHFNWQKIDAMKPFGGIRIEDNVVIHENSIENMTRDLKLA.

Asp-246, Asp-257, His-339, Glu-384, and Glu-423 together coordinate Mn(2+).

This sequence belongs to the peptidase M24B family. Bacterial-type prolidase subfamily. The cofactor is Mn(2+).

It carries out the reaction Xaa-L-Pro dipeptide + H2O = an L-alpha-amino acid + L-proline. Functionally, splits dipeptides with a prolyl residue in the C-terminal position. The polypeptide is Xaa-Pro dipeptidase (Klebsiella pneumoniae subsp. pneumoniae (strain ATCC 700721 / MGH 78578)).